We begin with the raw amino-acid sequence, 176 residues long: Co-chaperone protein HscB homolog (176 aa).

In terms of domain architecture, J spans 8 to 80 (DFFALFGLPV…LRRATYLLKL (73 aa)).

The protein belongs to the HscB family. Interacts with HscA and stimulates its ATPase activity.

Functionally, co-chaperone involved in the maturation of iron-sulfur cluster-containing proteins. Seems to help targeting proteins to be folded toward HscA. The protein is Co-chaperone protein HscB homolog of Cupriavidus taiwanensis (strain DSM 17343 / BCRC 17206 / CCUG 44338 / CIP 107171 / LMG 19424 / R1) (Ralstonia taiwanensis (strain LMG 19424)).